Consider the following 139-residue polypeptide: Ribonuclease P protein component (139 aa).

Residues Lys-120–Arg-139 are disordered.

This sequence belongs to the RnpA family. Consists of a catalytic RNA component (M1 or rnpB) and a protein subunit.

It carries out the reaction Endonucleolytic cleavage of RNA, removing 5'-extranucleotides from tRNA precursor.. Its function is as follows. RNaseP catalyzes the removal of the 5'-leader sequence from pre-tRNA to produce the mature 5'-terminus. It can also cleave other RNA substrates such as 4.5S RNA. The protein component plays an auxiliary but essential role in vivo by binding to the 5'-leader sequence and broadening the substrate specificity of the ribozyme. The polypeptide is Ribonuclease P protein component (Chlamydia pneumoniae (Chlamydophila pneumoniae)).